Consider the following 378-residue polypeptide: Probable serine/threonine-protein kinase PBL7 (378 aa).

The tract at residues 1–49 (MGWIPCSGKSSGRNKTRRNGDHKLDRKSSDCSVSTSEKSRAKSSLSESK) is disordered. G2 carries the N-myristoyl glycine lipid modification. The span at 18–29 (RNGDHKLDRKSS) shows a compositional bias: basic and acidic residues. Over residues 32 to 47 (SVSTSEKSRAKSSLSE) the composition is skewed to low complexity. A Phosphothreonine modification is found at T62. The 278-residue stretch at 73–350 (FRKECLIGEG…ADVVTALSYL (278 aa)) folds into the Protein kinase domain. Residues 79-87 (IGEGGFGRV) and K102 each bind ATP. Phosphotyrosine is present on Y147. Catalysis depends on D200, which acts as the Proton acceptor. Phosphoserine is present on residues S204 and S234. Phosphothreonine occurs at positions 235 and 240. Y248 carries the phosphotyrosine modification.

It belongs to the protein kinase superfamily. Ser/Thr protein kinase family. In terms of assembly, interacts with BSU1 and BSL1. Phosphorylated at Ser-43, Ser-46 and Ser-234. As to expression, widely expressed.

Its subcellular location is the cell membrane. The catalysed reaction is L-seryl-[protein] + ATP = O-phospho-L-seryl-[protein] + ADP + H(+). It carries out the reaction L-threonyl-[protein] + ATP = O-phospho-L-threonyl-[protein] + ADP + H(+). Serine/threonine-protein kinase involved in the positive regulation of brassinosteroid (BR) signaling and plant growth. Phosphorylates both BSU1 and BSL1 in vitro. The protein is Probable serine/threonine-protein kinase PBL7 of Arabidopsis thaliana (Mouse-ear cress).